We begin with the raw amino-acid sequence, 94 residues long: MNLNMLHDNVLIEALEECNSSSPIQLPDSAKKKPTQGKVVAVGPGVYNHSGNILPMTIKVGDVVFYRQWAGNEIEFHEKKYIVMKESDIIAKEA.

It belongs to the GroES chaperonin family. In terms of assembly, heptamer of 7 subunits arranged in a ring. Interacts with the chaperonin GroEL.

The protein resides in the cytoplasm. Its function is as follows. Together with the chaperonin GroEL, plays an essential role in assisting protein folding. The GroEL-GroES system forms a nano-cage that allows encapsulation of the non-native substrate proteins and provides a physical environment optimized to promote and accelerate protein folding. GroES binds to the apical surface of the GroEL ring, thereby capping the opening of the GroEL channel. The protein is Co-chaperonin GroES of Ehrlichia chaffeensis.